A 1104-amino-acid chain; its full sequence is Carbamoyl phosphate synthase large chain (1104 aa).

The tract at residues 1–402 (MPRRTDLKSV…ALQKALRSTE (402 aa)) is carboxyphosphate synthetic domain. Residues Arg129, Arg169, Gly175, Gly176, Glu208, Ile210, Glu215, Gly241, Val242, His243, Gln285, and Glu299 each coordinate ATP. One can recognise an ATP-grasp 1 domain in the interval 133-328 (KGVVERCGAE…IAKIAARLAV (196 aa)). Positions 285, 299, and 301 each coordinate Mg(2+). Mn(2+)-binding residues include Gln285, Glu299, and Asn301. The tract at residues 403 to 547 (KRGATFSWAG…YSSYDEEDET (145 aa)) is oligomerization domain. The interval 548–948 (RPREKAAIVI…AFGKSQTAAY (401 aa)) is carbamoyl phosphate synthetic domain. Residues 676–867 (GQVLERAGLV…LAKAAARLMA (192 aa)) form the ATP-grasp 2 domain. ATP is bound by residues Arg712, Arg751, Leu753, Glu758, Gly783, Ile784, His785, Ser786, Gln826, and Glu838. Residues Gln826, Glu838, and Asn840 each contribute to the Mg(2+) site. Gln826, Glu838, and Asn840 together coordinate Mn(2+). One can recognise an MGS-like domain in the interval 949–1099 (GGLPTAGTAF…QEHTARLNAA (151 aa)). An allosteric domain region spans residues 949–1104 (GGLPTAGTAF…RLNAAWEGRA (156 aa)).

The protein belongs to the CarB family. In terms of assembly, composed of two chains; the small (or glutamine) chain promotes the hydrolysis of glutamine to ammonia, which is used by the large (or ammonia) chain to synthesize carbamoyl phosphate. Tetramer of heterodimers (alpha,beta)4. The cofactor is Mg(2+). It depends on Mn(2+) as a cofactor.

The catalysed reaction is hydrogencarbonate + L-glutamine + 2 ATP + H2O = carbamoyl phosphate + L-glutamate + 2 ADP + phosphate + 2 H(+). It catalyses the reaction hydrogencarbonate + NH4(+) + 2 ATP = carbamoyl phosphate + 2 ADP + phosphate + 2 H(+). The protein operates within amino-acid biosynthesis; L-arginine biosynthesis; carbamoyl phosphate from bicarbonate: step 1/1. Its pathway is pyrimidine metabolism; UMP biosynthesis via de novo pathway; (S)-dihydroorotate from bicarbonate: step 1/3. Large subunit of the glutamine-dependent carbamoyl phosphate synthetase (CPSase). CPSase catalyzes the formation of carbamoyl phosphate from the ammonia moiety of glutamine, carbonate, and phosphate donated by ATP, constituting the first step of 2 biosynthetic pathways, one leading to arginine and/or urea and the other to pyrimidine nucleotides. The large subunit (synthetase) binds the substrates ammonia (free or transferred from glutamine from the small subunit), hydrogencarbonate and ATP and carries out an ATP-coupled ligase reaction, activating hydrogencarbonate by forming carboxy phosphate which reacts with ammonia to form carbamoyl phosphate. The protein is Carbamoyl phosphate synthase large chain of Kineococcus radiotolerans (strain ATCC BAA-149 / DSM 14245 / SRS30216).